Consider the following 365-residue polypeptide: Anhydro-N-acetylmuramic acid kinase (365 aa).

An ATP-binding site is contributed by 9–16; that stretch reads GTSLDGVD.

Belongs to the anhydro-N-acetylmuramic acid kinase family.

The enzyme catalyses 1,6-anhydro-N-acetyl-beta-muramate + ATP + H2O = N-acetyl-D-muramate 6-phosphate + ADP + H(+). It participates in amino-sugar metabolism; 1,6-anhydro-N-acetylmuramate degradation. Its pathway is cell wall biogenesis; peptidoglycan recycling. In terms of biological role, catalyzes the specific phosphorylation of 1,6-anhydro-N-acetylmuramic acid (anhMurNAc) with the simultaneous cleavage of the 1,6-anhydro ring, generating MurNAc-6-P. Is required for the utilization of anhMurNAc either imported from the medium or derived from its own cell wall murein, and thus plays a role in cell wall recycling. This Zymomonas mobilis subsp. mobilis (strain ATCC 31821 / ZM4 / CP4) protein is Anhydro-N-acetylmuramic acid kinase.